Reading from the N-terminus, the 259-residue chain is Ubiquinone biosynthesis protein COQ4 homolog, mitochondrial (259 aa).

Zn(2+)-binding residues include His-162, Asp-163, His-166, and Glu-178.

This sequence belongs to the COQ4 family. In terms of assembly, component of a multi-subunit COQ enzyme complex. The cofactor is Zn(2+).

The protein localises to the mitochondrion inner membrane. The enzyme catalyses a 4-hydroxy-3-methoxy-5-(all-trans-polyprenyl)benzoate + H(+) = a 2-methoxy-6-(all-trans-polyprenyl)phenol + CO2. It participates in cofactor biosynthesis; ubiquinone biosynthesis. In terms of biological role, lyase that catalyzes the C1-decarboxylation of 4-hydroxy-3-methoxy-5-(all-trans-polyprenyl)benzoic acid into 2-methoxy-6-(all-trans-polyprenyl)phenol during ubiquinone biosynthesis. In Bombyx mori (Silk moth), this protein is Ubiquinone biosynthesis protein COQ4 homolog, mitochondrial.